Reading from the N-terminus, the 449-residue chain is Cytochrome P450 monooxygenase iliC (449 aa).

Residues 28-44 (TFAITFMGVKQICTIEG) traverse the membrane as a helical segment. Cys-397 lines the heme pocket.

Belongs to the cytochrome P450 family. Requires heme as cofactor.

It localises to the membrane. It catalyses the reaction (3E,5S)-3-[(2E,4E,8S,10E,12Z)-1-hydroxy-4,8-dimethyltetradeca-2,4,10,12-tetraen-1-ylidene]-5-[(4-hydroxyphenyl)methyl]pyrrolidine-2,4-dione + reduced [NADPH--hemoprotein reductase] + O2 = 3-[(2E,4E,8S,10E,12Z)-4,8-dimethyltetradeca-2,4,10,12-tetraenoyl]-4-hydroxy-5-(4-hydroxyphenyl)-1,2-dihydropyridin-2-one + oxidized [NADPH--hemoprotein reductase] + 2 H2O. It functions in the pathway mycotoxin biosynthesis. Functionally, cytochrome P450 monooxygenase; part of the gene cluster that mediates the biosynthesis of ilicicolin H, a 4-hydroxy-2-pyridonealkaloid that has potent and broad antifungal activities by inhibiting the mitochondrial respiration chain. IliC catalyzes the ring expansion of the tetramate intermediate to the acyclic 2-pyridone intermediate that contains the trans bis-diene chain. The biosynthesis of ilicicolin H starts with formation of the tetramic acid by the hybrid PKS-NRPS synthetase iliA with the partnering trans-enoyl reductase iliB since iliA lacks a designated enoylreductase (ER) domain. The cytochrome P450 monooxygenase iliC then catalyzes the ring expansion of the tetramate to the acyclic 2-pyridone. The pericyclase iliD further converts the acyclic 2-pyridone into 8-epi-ilicicolin H. 8-epi-ilicicolin H might then spontaneously convert to ilicicolin H since ilicicolin H is produced in the absence of the epimerase iliE, in contrast to what was observed for the Talaromyces variabilis ilicolin H biosynthetic pathway. This chain is Cytochrome P450 monooxygenase iliC, found in Hypocrea jecorina (strain QM6a) (Trichoderma reesei).